We begin with the raw amino-acid sequence, 133 residues long: Small ribosomal subunit protein uS11 (133 aa).

The segment at 1-22 (MPPKTRGAVRKPRKKDKKNIAL) is disordered. Residues 7 to 17 (GAVRKPRKKDK) show a composition bias toward basic residues.

The protein belongs to the universal ribosomal protein uS11 family. As to quaternary structure, part of the 30S ribosomal subunit. Interacts with proteins S7 and S18. Binds to IF-3.

Functionally, located on the platform of the 30S subunit, it bridges several disparate RNA helices of the 16S rRNA. Forms part of the Shine-Dalgarno cleft in the 70S ribosome. The sequence is that of Small ribosomal subunit protein uS11 from Renibacterium salmoninarum (strain ATCC 33209 / DSM 20767 / JCM 11484 / NBRC 15589 / NCIMB 2235).